We begin with the raw amino-acid sequence, 150 residues long: MNKTVVPSLNTVERHWYVVDAENQCLGRLATEVASVLRGKNKPTYTPHLDTGDFVVVINADKVKVTGNKASDKLYRRHSGRPGGMKVETFAALQQRIPERIVEKAIKGMLPHNALGRQLFRKLKVYKGAEHPHGAQQPQPYQLNPSASIK.

Residues 130–150 (EHPHGAQQPQPYQLNPSASIK) form a disordered region. A compositionally biased stretch (polar residues) spans 136–150 (QQPQPYQLNPSASIK).

Belongs to the universal ribosomal protein uL13 family. Part of the 50S ribosomal subunit.

This protein is one of the early assembly proteins of the 50S ribosomal subunit, although it is not seen to bind rRNA by itself. It is important during the early stages of 50S assembly. The sequence is that of Large ribosomal subunit protein uL13 from Synechococcus sp. (strain RCC307).